The following is a 206-amino-acid chain: BAG family molecular chaperone regulator 1B (206 aa).

The BAG domain maps to 122-202 (IEAYIDELQQ…QYLSKLDSTK (81 aa)). At Ser-144 the chain carries Phosphoserine.

As to quaternary structure, binds to the ATPase domain of HSP70/HSC chaperones.

In terms of biological role, inhibits the chaperone activity of HSP70/HSC70 by promoting substrate release. The chain is BAG family molecular chaperone regulator 1B (bag102) from Schizosaccharomyces pombe (strain 972 / ATCC 24843) (Fission yeast).